Reading from the N-terminus, the 265-residue chain is Capsule polysaccharide export inner-membrane protein BexB (265 aa).

The next 6 helical transmembrane spans lie at 37-57, 64-84, 118-138, 151-171, 178-198, and 235-255; these read IGFF…VMMW, KFST…AMMW, LLEV…LVMI, LIAW…ICAI, FGKI…AFFF, and ESIG…LVMV. In terms of domain architecture, ABC transmembrane type-2 spans 37-258; sequence IGFFWLFVEP…LLGLVMVKNF (222 aa).

The protein belongs to the ABC-2 integral membrane protein family.

It localises to the cell inner membrane. Functionally, may form an ATP-driven capsule polysaccharide export apparatus, in association with the BexA, BexC and BexD proteins. In Haemophilus influenzae, this protein is Capsule polysaccharide export inner-membrane protein BexB (bexB).